A 159-amino-acid chain; its full sequence is Ribosomal RNA large subunit methyltransferase H (159 aa).

S-adenosyl-L-methionine contacts are provided by residues leucine 76, glycine 108, and phenylalanine 127–phenylalanine 132.

The protein belongs to the RNA methyltransferase RlmH family. Homodimer.

It is found in the cytoplasm. The enzyme catalyses pseudouridine(1915) in 23S rRNA + S-adenosyl-L-methionine = N(3)-methylpseudouridine(1915) in 23S rRNA + S-adenosyl-L-homocysteine + H(+). Specifically methylates the pseudouridine at position 1915 (m3Psi1915) in 23S rRNA. This Clostridium botulinum (strain Okra / Type B1) protein is Ribosomal RNA large subunit methyltransferase H.